A 123-amino-acid chain; its full sequence is Cytochrome b-c1 complex subunit 7 (123 aa).

It belongs to the UQCRB/QCR7 family. In terms of assembly, component of the ubiquinol-cytochrome c oxidoreductase (cytochrome b-c1 complex, complex III, CIII), a multisubunit enzyme composed of 3 respiratory subunits cytochrome b, cytochrome c1 and Rieske protein, 2 core protein subunits, and additional low-molecular weight protein subunits. The complex exists as an obligatory dimer and forms supercomplexes (SCs) in the inner mitochondrial membrane with cytochrome c oxidase (complex IV, CIV). In terms of processing, the N-terminus is blocked.

It is found in the mitochondrion inner membrane. Its function is as follows. Component of the ubiquinol-cytochrome c oxidoreductase, a multisubunit transmembrane complex that is part of the mitochondrial electron transport chain which drives oxidative phosphorylation. The respiratory chain contains 3 multisubunit complexes succinate dehydrogenase (complex II, CII), ubiquinol-cytochrome c oxidoreductase (cytochrome b-c1 complex, complex III, CIII) and cytochrome c oxidase (complex IV, CIV), that cooperate to transfer electrons derived from NADH and succinate to molecular oxygen, creating an electrochemical gradient over the inner membrane that drives transmembrane transport and the ATP synthase. The cytochrome b-c1 complex catalyzes electron transfer from ubiquinol to cytochrome c, linking this redox reaction to translocation of protons across the mitochondrial inner membrane, with protons being carried across the membrane as hydrogens on the quinol. In the process called Q cycle, 2 protons are consumed from the matrix, 4 protons are released into the intermembrane space and 2 electrons are passed to cytochrome c. The chain is Cytochrome b-c1 complex subunit 7 from Solanum tuberosum (Potato).